The chain runs to 448 residues: Na(+)-translocating NADH-quinone reductase subunit A (448 aa).

This sequence belongs to the NqrA family. As to quaternary structure, composed of six subunits; NqrA, NqrB, NqrC, NqrD, NqrE and NqrF.

It catalyses the reaction a ubiquinone + n Na(+)(in) + NADH + H(+) = a ubiquinol + n Na(+)(out) + NAD(+). Its function is as follows. NQR complex catalyzes the reduction of ubiquinone-1 to ubiquinol by two successive reactions, coupled with the transport of Na(+) ions from the cytoplasm to the periplasm. NqrA to NqrE are probably involved in the second step, the conversion of ubisemiquinone to ubiquinol. The chain is Na(+)-translocating NADH-quinone reductase subunit A from Glaesserella parasuis serovar 5 (strain SH0165) (Haemophilus parasuis).